A 463-amino-acid chain; its full sequence is Chromosomal replication initiator protein DnaA (463 aa).

The domain I, interacts with DnaA modulators stretch occupies residues 1–83; sequence MSLTLWQQCL…LRFEVGSKPV (83 aa). Residues 83 to 126 are domain II; that stretch reads VAQAISQPVMVSAHASAPGVVSRPAPTRPSWDNVPALAELSYRS. The domain III, AAA+ region stretch occupies residues 127-343; it reads NVNTKHNFDN…GALNRVIANA (217 aa). Positions 171, 173, 174, and 175 each coordinate ATP. Positions 344–463 are domain IV, binds dsDNA; that stretch reads NFTGRAITID…FSNLIRTLSS (120 aa).

Belongs to the DnaA family. As to quaternary structure, oligomerizes as a right-handed, spiral filament on DNA at oriC.

The protein resides in the cytoplasm. Plays an essential role in the initiation and regulation of chromosomal replication. ATP-DnaA binds to the origin of replication (oriC) to initiate formation of the DNA replication initiation complex once per cell cycle. Binds the DnaA box (a 9 base pair repeat at the origin) and separates the double-stranded (ds)DNA. Forms a right-handed helical filament on oriC DNA; dsDNA binds to the exterior of the filament while single-stranded (ss)DNA is stabiized in the filament's interior. The ATP-DnaA-oriC complex binds and stabilizes one strand of the AT-rich DNA unwinding element (DUE), permitting loading of DNA polymerase. After initiation quickly degrades to an ADP-DnaA complex that is not apt for DNA replication. Binds acidic phospholipids. The sequence is that of Chromosomal replication initiator protein DnaA from Erwinia tasmaniensis (strain DSM 17950 / CFBP 7177 / CIP 109463 / NCPPB 4357 / Et1/99).